A 291-amino-acid polypeptide reads, in one-letter code: 3-hydroxy-5-phosphonooxypentane-2,4-dione thiolase (291 aa).

K203 functions as the Schiff-base intermediate with substrate in the catalytic mechanism.

The protein belongs to the DeoC/FbaB aldolase family. As to quaternary structure, homodecamer.

It is found in the cytoplasm. It carries out the reaction dihydroxyacetone phosphate + acetyl-CoA = 3-hydroxy-2,4-dioxopentyl phosphate + CoA. Its function is as follows. Involved in the degradation of phospho-AI-2, thereby terminating induction of the lsr operon and closing the AI-2 signaling cycle. Catalyzes the transfer of an acetyl moiety from 3-hydroxy-5-phosphonooxypentane-2,4-dione to CoA to form glycerone phosphate and acetyl-CoA. The sequence is that of 3-hydroxy-5-phosphonooxypentane-2,4-dione thiolase from Escherichia coli (strain K12 / DH10B).